We begin with the raw amino-acid sequence, 305 residues long: Probable cell division protein WhiA (305 aa).

Residues 272–305 constitute a DNA-binding region (H-T-H motif); it reads SIQQLADSLTVPITKSGVNHRLRKINKIADELTD.

The protein belongs to the WhiA family.

Functionally, involved in cell division and chromosome segregation. This chain is Probable cell division protein WhiA, found in Streptococcus suis (strain 98HAH33).